Here is a 515-residue protein sequence, read N- to C-terminus: Bifunctional purine biosynthesis protein PurH (515 aa).

Residues 1–145 (MTKRALISVS…KNHASVTVVV (145 aa)) enclose the MGS-like domain.

This sequence belongs to the PurH family.

The enzyme catalyses (6R)-10-formyltetrahydrofolate + 5-amino-1-(5-phospho-beta-D-ribosyl)imidazole-4-carboxamide = 5-formamido-1-(5-phospho-D-ribosyl)imidazole-4-carboxamide + (6S)-5,6,7,8-tetrahydrofolate. The catalysed reaction is IMP + H2O = 5-formamido-1-(5-phospho-D-ribosyl)imidazole-4-carboxamide. Its pathway is purine metabolism; IMP biosynthesis via de novo pathway; 5-formamido-1-(5-phospho-D-ribosyl)imidazole-4-carboxamide from 5-amino-1-(5-phospho-D-ribosyl)imidazole-4-carboxamide (10-formyl THF route): step 1/1. It participates in purine metabolism; IMP biosynthesis via de novo pathway; IMP from 5-formamido-1-(5-phospho-D-ribosyl)imidazole-4-carboxamide: step 1/1. This Streptococcus mutans serotype c (strain ATCC 700610 / UA159) protein is Bifunctional purine biosynthesis protein PurH.